The chain runs to 136 residues: Large ribosomal subunit protein bL19 (136 aa).

It belongs to the bacterial ribosomal protein bL19 family.

In terms of biological role, this protein is located at the 30S-50S ribosomal subunit interface and may play a role in the structure and function of the aminoacyl-tRNA binding site. The sequence is that of Large ribosomal subunit protein bL19 from Xylella fastidiosa (strain M23).